The following is a 549-amino-acid chain: Speedy protein E3 (549 aa).

Over residues 1-15 (MTSHQPQPQEEQSPQ) the composition is skewed to low complexity. Disordered stretches follow at residues 1–74 (MTSH…EPEE), 126–145 (KREC…APEP), 188–218 (SPPR…APEP), 261–291 (SPPR…APEP), and 334–364 (SPPR…APEP). 5 stretches are compositionally biased toward acidic residues: residues 58 to 74 (DESD…EPEE), 131 to 145 (DESD…APEP), 204 to 218 (DESD…APEP), 277 to 291 (DESD…APEP), and 350 to 364 (DESD…APEP).

It belongs to the Speedy/Ringo family. As to expression, predominantly expressed in testis and spleen.

In Homo sapiens (Human), this protein is Speedy protein E3.